An 82-amino-acid chain; its full sequence is Acyl carrier protein (82 aa).

A Carrier domain is found at 3–77 (SSIFDKVQNI…QAIEFIQHAI (75 aa)). O-(pantetheine 4'-phosphoryl)serine is present on Ser37.

It belongs to the acyl carrier protein (ACP) family. Post-translationally, 4'-phosphopantetheine is transferred from CoA to a specific serine of apo-ACP by AcpS. This modification is essential for activity because fatty acids are bound in thioester linkage to the sulfhydryl of the prosthetic group.

It is found in the plastid. The protein resides in the chloroplast. It participates in lipid metabolism; fatty acid biosynthesis. Its function is as follows. Carrier of the growing fatty acid chain in fatty acid biosynthesis. This chain is Acyl carrier protein, found in Gracilaria tenuistipitata var. liui (Red alga).